We begin with the raw amino-acid sequence, 493 residues long: MNQKQLTKLRTMVPEMKRVRHIHFIGIGGAGMGGIAEVLANEGYKITGSDLAENVVTQQLSHLGICIFFHHHRDNVKNASVVVVSSAIPEDNPEILAAHEARIPVIQRAEMLAELMRFRHGIAIAGTHGKTTTTAMVASIYAQAGLDPTFVNGGLIKAAGKHAQLGSSRYLIVEADESDASFIHLQPLVAIVTNIEADHMDTYQGNFEHLKQTFINFLHNLPFYGRAILCIDDQVIRTLLPRIARHITTYGFSEDADIKITGYEQKEFTSYFMLERVHKPILKIQLNAPGRHNALNAAAAVAVATEEGVEDEHILQALSFFQGTGRRFDCLGIFPLQPVNGQQGEVMLIDDYGHHPTEVAATIKAARVGWPTKRLVMIFQPHRYSRTRDLYDDFVNVLSQVDILLMLEIYSAGESPIPDISSCALCDSIRDFSHRMPILVTDHEKLPSLLAKQLKENDMVLVQGAGNIGKVARTLAECELKVPPLIQKESHYA.

126-132 (GTHGKTT) is an ATP binding site.

Belongs to the MurCDEF family.

The protein resides in the cytoplasm. It carries out the reaction UDP-N-acetyl-alpha-D-muramate + L-alanine + ATP = UDP-N-acetyl-alpha-D-muramoyl-L-alanine + ADP + phosphate + H(+). Its pathway is cell wall biogenesis; peptidoglycan biosynthesis. In terms of biological role, cell wall formation. In Hamiltonella defensa subsp. Acyrthosiphon pisum (strain 5AT), this protein is UDP-N-acetylmuramate--L-alanine ligase.